The primary structure comprises 284 residues: Actin-like protein ARP10 (284 aa).

Belongs to the actin family. ARP10 subfamily. As to quaternary structure, self-associates. Component of the dynactin complex composed of at least ARP1, JNM1, NIP100 and ARP10. Dynactin comprises a short rod of the ARP1 filament attached to ARP10 at its pointed-end and probably associated with the capping protein at its barbed-end. The rod is implicated in dynein cargo binding. A sidearm formed by NIP100 projects from the ARP1 filament and is implicated in motor binding. Interacts with ARP1 and JNM1.

Its subcellular location is the cytoplasm. It localises to the cytoskeleton. In terms of biological role, pointed-end-associated component of the dynactin complex which assists cytoplasmic dynein by increasing its processivity and by regulation of its cargo binding. The dynactin complex is required for the spindle translocation late in anaphase and is involved in a cell wall synthesis checkpoint. May regulate the association of the dynactin complex with the plasma membrane. The protein is Actin-like protein ARP10 (ARP10) of Saccharomyces cerevisiae (strain ATCC 204508 / S288c) (Baker's yeast).